A 1026-amino-acid chain; its full sequence is Unconventional myosin-Ic (1026 aa).

Position 1 is an N-acetylmethionine (M1). The region spanning 12–695 (GVQDFLLLEN…TLFITEDALE (684 aa)) is the Myosin motor domain. ATP-binding positions include N53, Y61, 104–113 (SGESGAGKTE), and 157–161 (NDNSS). K349 carries the post-translational modification N6-methyllysine. The actin-binding stretch occupies residues 572 to 594 (LAKLMDILMSKEPSYVRCIKPND). 2 consecutive IQ domains span residues 698 to 727 (KQTI…AVIV) and 721 to 750 (IRHA…AADT). Residues 849 to 1024 (KDGYSRSVPK…NGHLSVTTPR (176 aa)) form the TH1 domain.

This sequence belongs to the TRAFAC class myosin-kinesin ATPase superfamily. Myosin family. Interacts (via its IQ motifs) with calm.

It localises to the cytoplasm. The protein resides in the cell cortex. It is found in the cell projection. The protein localises to the ruffle membrane. Its subcellular location is the cytoplasmic vesicle. It localises to the stereocilium membrane. Myosins are actin-based motor molecules with ATPase activity. Unconventional myosins serve in intracellular movements. Their highly divergent tails are presumed to bind to membranous compartments, which would be moved relative to actin filaments. This Danio rerio (Zebrafish) protein is Unconventional myosin-Ic (myo1c).